Consider the following 204-residue polypeptide: Gellan lyase (204 aa).

Multimer.

It is found in the secreted. The enzyme catalyses Eliminative cleavage of beta-D-glucopyranosyl-(1-&gt;4)-beta-D-glucopyranosyluronate bonds of gellan backbone releasing tetrasaccharides containing a 4-deoxy-4,5-unsaturated D-glucopyranosyluronic acid at the non-reducing end. The tetrasaccharide produced from deacetylated gellan is beta-D-4-deoxy-Delta(4)-GlcAp-(1-&gt;4)-beta-D-Glcp-(1-&gt;4)-alpha-L-Rhap-(1-&gt;3)-beta-D-Glcp.. Activity is stimulated by zinc, potassium, lithium, cobalt, sodium, calcium, iron, manganase, magnesium and mercury ions at a concentration of 1 mM, but inhibited by copper ions at a concentration of 1 mM. Activity is inhibited by potassium, sodium and magnesium ions at a concentration of 1 M. Activity is inhibited by urea, EDTA, dithiothreitol, p-CMB, PSF, natrium lauryl sulfate and N-bromosuccinimide. Its function is as follows. Cleaves the glycosidic bonds of gellan backbone and releases tetrasaccharide units of glucuronyl-glucosyl-rhamnosyl-glucose with unsaturated glucuronic acid at the non-reducing terminal. The enzyme is highly specific to the heteropolysaccharide gellan. In Geobacillus stearothermophilus (Bacillus stearothermophilus), this protein is Gellan lyase.